The chain runs to 475 residues: Protein nucleotidyltransferase YdiU (475 aa).

Residues glycine 82, glycine 84, arginine 85, lysine 105, aspartate 117, glycine 118, arginine 168, and arginine 175 each contribute to the ATP site. The active-site Proton acceptor is the aspartate 240. Residues asparagine 241 and aspartate 250 each contribute to the Mg(2+) site. Residue aspartate 250 coordinates ATP.

This sequence belongs to the SELO family. The cofactor is Mg(2+). It depends on Mn(2+) as a cofactor.

It carries out the reaction L-seryl-[protein] + ATP = 3-O-(5'-adenylyl)-L-seryl-[protein] + diphosphate. The enzyme catalyses L-threonyl-[protein] + ATP = 3-O-(5'-adenylyl)-L-threonyl-[protein] + diphosphate. It catalyses the reaction L-tyrosyl-[protein] + ATP = O-(5'-adenylyl)-L-tyrosyl-[protein] + diphosphate. The catalysed reaction is L-histidyl-[protein] + UTP = N(tele)-(5'-uridylyl)-L-histidyl-[protein] + diphosphate. It carries out the reaction L-seryl-[protein] + UTP = O-(5'-uridylyl)-L-seryl-[protein] + diphosphate. The enzyme catalyses L-tyrosyl-[protein] + UTP = O-(5'-uridylyl)-L-tyrosyl-[protein] + diphosphate. In terms of biological role, nucleotidyltransferase involved in the post-translational modification of proteins. It can catalyze the addition of adenosine monophosphate (AMP) or uridine monophosphate (UMP) to a protein, resulting in modifications known as AMPylation and UMPylation. The sequence is that of Protein nucleotidyltransferase YdiU from Aeromonas hydrophila subsp. hydrophila (strain ATCC 7966 / DSM 30187 / BCRC 13018 / CCUG 14551 / JCM 1027 / KCTC 2358 / NCIMB 9240 / NCTC 8049).